The following is a 483-amino-acid chain: Acetyltransferase AOL_s00215g273 (483 aa).

The next 8 helical transmembrane spans lie at 9–29, 33–53, 141–161, 191–211, 292–312, 334–354, 372–392, and 453–473; these read ALIGVTVIPTLILSLPTTSFV, IYPLPALLVLRALLWPPTEGL, VAYIFESMVSILSIYLGLYTC, IFQMVVAFMGIFAMVSNSVLV, FLVFSAFGVSGLLHSLAVYYG, VTGYFFYIQPFAITLEDFICW, WFVGMVYTLTWFTWGTAVLWI, and LGGYLYLYAYTTLEILGGSGF.

The protein belongs to the wax synthase family.

It localises to the membrane. It participates in secondary metabolite biosynthesis; terpenoid biosynthesis. Its function is as follows. Acetyltransferase; part of the gene cluster that mediates the biosynthesis of sesquiterpenyl epoxy-cyclohexenoids (SECs) such as anthrobotrisins and arthrosporols, metabolites that possess a novel hybrid carbon skeleton consisting of a polyketide-derived epoxycyclohexenol combined with a terpenoid-derived monocyclic sesquiterpenol substructure (PKS-PTS hybrid). The SEC pathway plays an important role for fungal soil colonization via decreasing fungal nematode-capturing ability. The role of the acetyltransferase in SEC biosynthesis has still to be determined. The pathway begins with the biosynthesis of 6-methylsalicylic acid (6-MSA), the first precursor of the polyketide-derived epoxycyclohexenol in arthrosporols, by the polyketide synthase (PKS) AOL_s00215g283 via condensation of 1 acetate and 3 malonate units. The 6-methylsalicylic acid decarboxylase AOL_s00215g281 then catalyzes the decarboxylation of 6-methylsalicylic acid to yield m-cresol. The cytochrome P450 monooxygenase AOL_s00215g282 further oxidizes m-cresol to yield toluquinol. With the assistance of the oxidoreductase AOL_s00215g277, the polyprenyl transferase AOL_s00215g276 catalyzes the farnesylation of toluquinol to produce farnesyl hydroquinone, the hybrid precursor for biosynthesis of SECs. Farnesyl hydroquinone undergoes epoxidation and then subsequent dehydrogenation to form farnesyl epoxy-quinone, the first and simplest SEC. The cytochrome P450 monooxygenase AOL_s00215g278 and the FAD-dependent monooxygenase AOL_s00215g279 might be involved in the oxygenation of the phenol moiety, most likely in the epoxy formation. The cytochrome P450 monooxygenases AOL_s00215g274 and AOL_s00215g280 are involved in specific regional ketone reductions at respectively C-4 and C-1 of farnesyl epoxy-quinone PubMed:33823587. The protein is Acetyltransferase AOL_s00215g273 of Arthrobotrys oligospora (strain ATCC 24927 / CBS 115.81 / DSM 1491) (Nematode-trapping fungus).